The chain runs to 374 residues: Anhydro-N-acetylmuramic acid kinase (374 aa).

12 to 19 (GTSLDGVD) contacts ATP.

The protein belongs to the anhydro-N-acetylmuramic acid kinase family.

It catalyses the reaction 1,6-anhydro-N-acetyl-beta-muramate + ATP + H2O = N-acetyl-D-muramate 6-phosphate + ADP + H(+). The protein operates within amino-sugar metabolism; 1,6-anhydro-N-acetylmuramate degradation. Its pathway is cell wall biogenesis; peptidoglycan recycling. Catalyzes the specific phosphorylation of 1,6-anhydro-N-acetylmuramic acid (anhMurNAc) with the simultaneous cleavage of the 1,6-anhydro ring, generating MurNAc-6-P. Is required for the utilization of anhMurNAc either imported from the medium or derived from its own cell wall murein, and thus plays a role in cell wall recycling. The sequence is that of Anhydro-N-acetylmuramic acid kinase from Escherichia fergusonii (strain ATCC 35469 / DSM 13698 / CCUG 18766 / IAM 14443 / JCM 21226 / LMG 7866 / NBRC 102419 / NCTC 12128 / CDC 0568-73).